The following is a 212-amino-acid chain: MKINSNTIIIGKKVILVPYKKKHVEKYWKWMQSEEIREQTASEELTIEEEFENQESWFKDDHKITFIILDKDLLLENEKDSNGYSNENDIKSMIGDVNIFFNQYEDEGTAELEVMIAEPTSRRKGLAREAISIIMGYGIEHLSTITKKYIVKIGESNQPSIQMFKSMNFKQIGSVNVFKEILLEFENGENNINLLNLKNNDNYKSLIFKNWE.

One can recognise an N-acetyltransferase domain in the interval 34–201 (EEIREQTASE…INLLNLKNND (168 aa)).

It belongs to the acetyltransferase family. GNAT subfamily.

The protein is N-acetyltransferase 9-like protein (nat9) of Dictyostelium discoideum (Social amoeba).